Reading from the N-terminus, the 500-residue chain is Transcription termination factor MTERF8, chloroplastic (500 aa).

A chloroplast-targeting transit peptide spans 1-64 (MVILSLVSCS…NHREPALTFR (64 aa)).

This sequence belongs to the mTERF family.

Its subcellular location is the plastid. The protein resides in the chloroplast. Its function is as follows. Transcription termination factor that is transcriptionally active in chloroplasts. The chain is Transcription termination factor MTERF8, chloroplastic from Arabidopsis thaliana (Mouse-ear cress).